Consider the following 213-residue polypeptide: Pyridoxine/pyridoxamine 5'-phosphate oxidase 2 (213 aa).

Substrate contacts are provided by residues arginine 9–tyrosine 12 and lysine 67. FMN is bound by residues arginine 62 to lysine 67, phenylalanine 77 to threonine 78, lysine 84, and glutamine 106. Substrate contacts are provided by tyrosine 124, arginine 128, and serine 132. FMN contacts are provided by residues glutamine 141–serine 142 and tryptophan 186. Arginine 192–histidine 194 contacts substrate. An FMN-binding site is contributed by arginine 196.

Belongs to the pyridoxamine 5'-phosphate oxidase family. In terms of assembly, homodimer. The cofactor is FMN.

It catalyses the reaction pyridoxamine 5'-phosphate + O2 + H2O = pyridoxal 5'-phosphate + H2O2 + NH4(+). The enzyme catalyses pyridoxine 5'-phosphate + O2 = pyridoxal 5'-phosphate + H2O2. It participates in cofactor metabolism; pyridoxal 5'-phosphate salvage; pyridoxal 5'-phosphate from pyridoxamine 5'-phosphate: step 1/1. The protein operates within cofactor metabolism; pyridoxal 5'-phosphate salvage; pyridoxal 5'-phosphate from pyridoxine 5'-phosphate: step 1/1. Catalyzes the oxidation of either pyridoxine 5'-phosphate (PNP) or pyridoxamine 5'-phosphate (PMP) into pyridoxal 5'-phosphate (PLP). This chain is Pyridoxine/pyridoxamine 5'-phosphate oxidase 2, found in Hydrogenovibrio crunogenus (strain DSM 25203 / XCL-2) (Thiomicrospira crunogena).